A 349-amino-acid polypeptide reads, in one-letter code: Protein RAE1 (349 aa).

The disordered stretch occupies residues 1–21 (MATFGAPATANSNPNKSYEVT). Residue Ala2 is modified to N-acetylalanine. Residues 9–21 (TANSNPNKSYEVT) are compositionally biased toward polar residues. WD repeat units lie at residues 23–62 (SPAD…ASLA), 70–109 (SHDQ…QPVT), 112–151 (MHEG…PVHT), 153–190 (QLPD…TEFK), and 244–283 (NDIY…RLKA). Positions 128-144 (LLATGSWDKTLKYWDTR) match the DWD box motif.

This sequence belongs to the WD repeat rae1 family. Part of the nuclear pore complex (NPC). The NPC has an eight-fold symmetrical structure comprising a central transport channel and two rings, the cytoplasmic and nuclear rings, to which eight filaments are attached. The cytoplasmic filaments have loose ends, while the nuclear filaments are joined in a distal ring, forming a nuclear basket. NPCs are highly dynamic in configuration and composition, and can be devided in 3 subcomplexes, the NUP62 subcomplex, the NUP107-160 subcomplex and the NUP93 subcomplex, containing approximately 30 different nucleoporin proteins. Interacts with DDB1A.

It localises to the nucleus envelope. The protein resides in the nucleus. The protein localises to the nuclear pore complex. This Arabidopsis thaliana (Mouse-ear cress) protein is Protein RAE1.